Reading from the N-terminus, the 138-residue chain is Small ribosomal subunit protein uS11c (138 aa).

It belongs to the universal ribosomal protein uS11 family. In terms of assembly, part of the 30S ribosomal subunit.

Its subcellular location is the plastid. The sequence is that of Small ribosomal subunit protein uS11c from Cuscuta gronovii (Common dodder).